The following is a 443-amino-acid chain: Putative F-box/FBD/LRR-repeat protein At5g22670 (443 aa).

The F-box domain occupies 10-56 (QDSISLLPDDLLCRILSNLPTKVAVRTSVLSKRWKRFSLSVPLLEFN). 5 LRR repeats span residues 139-165 (SLRL…HLID), 166-191 (NIYP…NVSR), 219-243 (YGDI…SLRD), 275-300 (NFLL…TMSG), and 325-353 (YAVF…VLEL). The region spanning 361-412 (LLILSSSIPKCLRSSLEHVEIHTPISGAEAEMKLVKYFLENSAVLKKFTLQL) is the FBD domain.

The protein is Putative F-box/FBD/LRR-repeat protein At5g22670 of Arabidopsis thaliana (Mouse-ear cress).